The sequence spans 255 residues: Geranylgeranylglyceryl phosphate synthase (255 aa).

2 residues coordinate Mg(2+): Asp31 and Ser60. Residues 179–185 (YLEAGSG), 211–212 (GG), and 233–234 (GT) contribute to the sn-glycerol 1-phosphate site.

The protein belongs to the GGGP/HepGP synthase family. Group II subfamily. The cofactor is Mg(2+).

It is found in the cytoplasm. The catalysed reaction is sn-glycerol 1-phosphate + (2E,6E,10E)-geranylgeranyl diphosphate = sn-3-O-(geranylgeranyl)glycerol 1-phosphate + diphosphate. Its pathway is membrane lipid metabolism; glycerophospholipid metabolism. Functionally, prenyltransferase that catalyzes the transfer of the geranylgeranyl moiety of geranylgeranyl diphosphate (GGPP) to the C3 hydroxyl of sn-glycerol-1-phosphate (G1P). This reaction is the first ether-bond-formation step in the biosynthesis of archaeal membrane lipids. The chain is Geranylgeranylglyceryl phosphate synthase from Methanothrix thermoacetophila (strain DSM 6194 / JCM 14653 / NBRC 101360 / PT) (Methanosaeta thermophila).